The following is a 200-amino-acid chain: NADH-ubiquinone oxidoreductase 21.3 kDa subunit (200 aa).

The next 3 helical transmembrane spans lie at 16–36 (IKSG…MASL), 48–68 (MHVF…GGIY), and 105–125 (FPVI…FAFS).

Complex I is composed of about 40 different subunits.

The protein localises to the mitochondrion inner membrane. It catalyses the reaction a ubiquinone + NADH + 5 H(+)(in) = a ubiquinol + NAD(+) + 4 H(+)(out). Functionally, transfer of electrons from NADH to the respiratory chain. The immediate electron acceptor for the enzyme is believed to be ubiquinone. In Neurospora crassa (strain ATCC 24698 / 74-OR23-1A / CBS 708.71 / DSM 1257 / FGSC 987), this protein is NADH-ubiquinone oxidoreductase 21.3 kDa subunit.